A 340-amino-acid polypeptide reads, in one-letter code: MRLCLIPWNTTPHRVLPPVVWSAPSRKKPVLSARNSMMFGHLSPVRNPRLRGKFNLQLPSLDEQVIPTRLPKMEVRAEEPKEATEVKDQVETQGQEDNKTGPCSNGKAASTSRPLETQGNLTSSWYNPRPLEGNVHLKSLTEKNQTDKAQVHAVSFYSKGHGVTSSHSPAGGILPFGKPDPLPAVLPAPVPDCSLWPEKAALKVLGKDHLPSSPGLLMVGEDMQPKDPAALRSSRSSPPRAAGHRPRKRKLSGPPLQLQQTPPLQLRWDRDEGPPPAKLPCLSPEALLVGKASQREGRLQQGNMRKNVRVLSRTSKFRRLRQLLRRRKKRWQGRRGGSRL.

The segment covering 75–90 (VRAEEPKEATEVKDQV) has biased composition (basic and acidic residues). 2 disordered regions span residues 75 to 130 (VRAE…NPRP) and 215 to 281 (GLLM…KLPC). Polar residues predominate over residues 91 to 126 (ETQGQEDNKTGPCSNGKAASTSRPLETQGNLTSSWY). The segment covering 228–241 (PAALRSSRSSPPRA) has biased composition (low complexity). The segment covering 242–251 (AGHRPRKRKL) has biased composition (basic residues). A compositionally biased stretch (low complexity) spans 254 to 266 (PPLQLQQTPPLQL).

This sequence belongs to the UPF0607 family.

This chain is Putative UPF0607 protein ENSP00000332738, found in Homo sapiens (Human).